A 311-amino-acid polypeptide reads, in one-letter code: Protease HtpX homolog 1 (311 aa).

2 consecutive transmembrane segments (helical) span residues 12-32 (IIAL…IINF) and 35-55 (FPVI…WLIS). Residue His-137 participates in Zn(2+) binding. Residue Glu-138 is part of the active site. Residue His-141 coordinates Zn(2+). 2 consecutive transmembrane segments (helical) span residues 159–179 (ILGF…IFAV) and 184–204 (ILVG…TFFL). Glu-216 lines the Zn(2+) pocket.

The protein belongs to the peptidase M48B family. Zn(2+) is required as a cofactor.

The protein localises to the cell membrane. The sequence is that of Protease HtpX homolog 1 from Sulfurisphaera tokodaii (strain DSM 16993 / JCM 10545 / NBRC 100140 / 7) (Sulfolobus tokodaii).